The chain runs to 300 residues: DDRGK domain-containing protein 1 (300 aa).

Residues 1–2 lie on the Lumenal side of the membrane; the sequence is MD. The helical transmembrane segment at 3-23 threads the bilayer; the sequence is VVLYIAAAAILLVLIVFSVKI. The Cytoplasmic segment spans residues 24–300; sequence RGRTQDADVE…NLTPDIHSSA (277 aa). Positions 28-173 are disordered; sequence QDADVEDHQN…RVKEEQERRE (146 aa). Residues 78 to 90 are compositionally biased toward acidic residues; the sequence is NEDSPVEADEDEE. The span at 112-173 shows a compositional bias: basic and acidic residues; that stretch reads KLEEKQARKA…RVKEEQERRE (62 aa). Residues 183–197 carry the UFM1-interacting motif (UFIM) motif; that stretch reads SFIIEDQGEAEELTE. One can recognise a PCI domain in the interval 217–261; it reads VLLEDLASQFGLRTQDAIARLQDLIADGSLTGVIDDRGKFIFITP.

Belongs to the DDRGK1 family. In terms of assembly, component of the UFM1 ribosome E3 ligase (UREL) complex, composed of ufl1, ddrgk1 and cdk5rap3.

It localises to the endoplasmic reticulum membrane. In terms of biological role, component of the UFM1 ribosome E3 ligase (UREL) complex, a multiprotein complex that catalyzes ufmylation of endoplasmic reticulum-docked proteins. The UREL complex plays a key role in ribosome recycling by mediating mono-ufmylation of the RPL26/uL24 subunit of the 60S ribosome following ribosome dissociation: ufmylation weakens the junction between post-termination 60S subunits and SEC61 translocons, promoting release and recycling of the large ribosomal subunit from the endoplasmic reticulum membrane. Ufmylation of RPL26/uL24 and subsequent 60S ribosome recycling either take place after normal termination of translation or after ribosome stalling during cotranslational translocation at the endoplasmic reticulum. Within the UREL complex, DDRGK1 tethers the complex to the endoplasmic reticulum membrane to restrict its activity to endoplasmic reticulum-docked ribosomes and acts as an ufmylation 'reader': following RPL26/uL24 ufmylation, DDRGK1 specifically binds to ufmylated RPL26/uL24 via its UFIM motif, resulting in stable association between the 60S ribosome and the UREL complex, followed by dissociation of the 60S ribosome subunit from the endoplasmic reticulum membrane. The UREL complex is also involved in reticulophagy in response to endoplasmic reticulum stress by promoting ufmylation of proteins such as CYB5R3 and RPN1, thereby promoting lysosomal degradation of ufmylated proteins. Plays a role in cartilage development through sox9, inhibiting the ubiquitin-mediated proteasomal degradation of this transcriptional regulator. Required for stabilization and ufmylation of ATG9A. The sequence is that of DDRGK domain-containing protein 1 from Danio rerio (Zebrafish).